The following is a 623-amino-acid chain: Kelch repeat and BTB domain-containing protein 2 (623 aa).

The BTB domain occupies 31 to 98 (TDIVLIVEGT…AYTGNLAMND (68 aa)). A BACK domain is found at 133-229 (CVRLLSFADL…IRIDALSEVT (97 aa)). Ser-300 is subject to Phosphoserine. Kelch repeat units lie at residues 317 to 380 (DIYI…CCEG), 381 to 429 (HIYA…VVHD), 431 to 469 (IYVMTLNLMYCYFPRSDSWVEMAMRQTSRSFASAAAFGD), 470 to 529 (KIFY…RAVV), and 535 to 581 (CVFM…DFRC).

Component of the BCR(KBTBD2) E3 ubiquitin ligase complex, at least composed of CUL3, KBTBD2 and RBX1. Interacts (via the BTB domain) with CUL3.

It functions in the pathway protein modification; protein ubiquitination. Functionally, substrate-specific adapter of a BCR (BTB-CUL3-RBX1) E3 ubiquitin ligase complex that acts as a regulator of the insulin signaling pathway, modulating insulin sensitivity by limiting PIK3R1/p85alpha abundance in adipocytes. Targets PIK3R1, the regulatory subunit of phosphatidylinositol 3-kinase (PI3K), for 'Lys-48'-linked polyubiquitination and proteasome-mediated degradation. The polypeptide is Kelch repeat and BTB domain-containing protein 2 (KBTBD2) (Pongo abelii (Sumatran orangutan)).